The primary structure comprises 305 residues: tRNA dimethylallyltransferase (305 aa).

8–15 (GPTAIGKS) is an ATP binding site. Residue 10–15 (TAIGKS) participates in substrate binding. The segment at 33 to 36 (DSMA) is interaction with substrate tRNA.

This sequence belongs to the IPP transferase family. In terms of assembly, monomer. Mg(2+) serves as cofactor.

It catalyses the reaction adenosine(37) in tRNA + dimethylallyl diphosphate = N(6)-dimethylallyladenosine(37) in tRNA + diphosphate. Catalyzes the transfer of a dimethylallyl group onto the adenine at position 37 in tRNAs that read codons beginning with uridine, leading to the formation of N6-(dimethylallyl)adenosine (i(6)A). This chain is tRNA dimethylallyltransferase, found in Aquifex aeolicus (strain VF5).